Reading from the N-terminus, the 343-residue chain is MKTSDFDYNLPQEYIAQKPAEPRDSSRLLVLNRQSEELTNRIFGEITDYFKPGDVLVMNDSRVLPARIKGIKQDTSAKIEILLLKRDGEGCWEALLKPSKRTKPGTIIDIHQPNGGISTQAKVLADKDDSIKLLRFSDETHLMKLGEVPLPPYIHTPVADPERYQTVYALTNGSVAAPTAGLHFTPELLKRLTEMGVICTYVTLHIGLDTFRPVKEEDPKDHKIHREYGILSKETASAICCAKETGKRVFCVGTSATRLVEQASHLSQTSLITSYSGWADLFILPGYKFRVADCFITNFHLPRSTPLMLTSAFAGWPFLRKAYEKAISEHYRFYSFGDAMLIL.

This sequence belongs to the QueA family. In terms of assembly, monomer.

It localises to the cytoplasm. The enzyme catalyses 7-aminomethyl-7-carbaguanosine(34) in tRNA + S-adenosyl-L-methionine = epoxyqueuosine(34) in tRNA + adenine + L-methionine + 2 H(+). It functions in the pathway tRNA modification; tRNA-queuosine biosynthesis. Functionally, transfers and isomerizes the ribose moiety from AdoMet to the 7-aminomethyl group of 7-deazaguanine (preQ1-tRNA) to give epoxyqueuosine (oQ-tRNA). This Dehalococcoides mccartyi (strain ATCC BAA-2100 / JCM 16839 / KCTC 5957 / BAV1) protein is S-adenosylmethionine:tRNA ribosyltransferase-isomerase.